The chain runs to 266 residues: Gap junction beta-4 protein (266 aa).

An intramembrane segment occupies 2–13 (NWAFLQGLLSGV). At 14–20 (NKYSTVL) the chain is on the cytoplasmic side. A helical transmembrane segment spans residues 21–40 (SRIWLSVVFIFRVLVYVVAA). At 41–73 (EEVWDDEQKDFVCNTKQPGCPNVCYDEFFPVSH) the chain is on the extracellular side. 3 cysteine pairs are disulfide-bonded: cysteine 53-cysteine 175, cysteine 60-cysteine 169, and cysteine 64-cysteine 164. A helical membrane pass occupies residues 74–94 (VRLWALQLILVTCPSLLVVMH). Over 95 to 130 (VAYREERERKHHLKHGPNAPSLYDNLSKKRGGLWWT) the chain is Cytoplasmic. Residues 131–151 (YLLSLIFKAAVDAGFLYIFHR) traverse the membrane as a helical segment. Over 152-184 (LYKDYDMPRVVACSVEPCPHTVDCYISRPTEKK) the chain is Extracellular. The chain crosses the membrane as a helical span at residues 185–205 (VFTYFMVTTAAICILLNLSEV). Residues 206 to 266 (FYLVGKRCME…SAPVDAGGYP (61 aa)) lie on the Cytoplasmic side of the membrane.

The protein belongs to the connexin family. Beta-type (group I) subfamily. As to quaternary structure, a hemichannel or connexon is composed of a hexamer of connexins. A functional gap junction is formed by the apposition of two hemichannels. Forms heteromeric channels with GJB2.

It is found in the cell membrane. Its subcellular location is the cell junction. It localises to the gap junction. In terms of biological role, structural component of gap junctions. Gap junctions are dodecameric channels that connect the cytoplasm of adjoining cells. They are formed by the docking of two hexameric hemichannels, one from each cell membrane. Small molecules and ions diffuse from one cell to a neighboring cell via the central pore. The sequence is that of Gap junction beta-4 protein (GJB4) from Homo sapiens (Human).